We begin with the raw amino-acid sequence, 282 residues long: NADH-ubiquinone oxidoreductase chain 2 (282 aa).

The next 7 helical transmembrane spans lie at 17–37 (ILTN…VVFI), 58–78 (SLGL…IILL), 87–107 (FWIF…FLTF), 115–135 (ILLQ…LLIC), 166–186 (FSMF…VLLI), 202–222 (TTLV…IFSL), and 232–252 (FTLF…FWLI).

Belongs to the complex I subunit 2 family.

It is found in the mitochondrion inner membrane. The enzyme catalyses a ubiquinone + NADH + 5 H(+)(in) = a ubiquinol + NAD(+) + 4 H(+)(out). In terms of biological role, core subunit of the mitochondrial membrane respiratory chain NADH dehydrogenase (Complex I) that is believed to belong to the minimal assembly required for catalysis. Complex I functions in the transfer of electrons from NADH to the respiratory chain. The immediate electron acceptor for the enzyme is believed to be ubiquinone. This chain is NADH-ubiquinone oxidoreductase chain 2, found in Caenorhabditis elegans.